The chain runs to 284 residues: Nucleotide-binding protein Sputw3181_3461 (284 aa).

8–15 (GRSGSGKS) provides a ligand contact to ATP. GTP is bound at residue 56-59 (DVRN).

It belongs to the RapZ-like family.

In terms of biological role, displays ATPase and GTPase activities. This is Nucleotide-binding protein Sputw3181_3461 from Shewanella sp. (strain W3-18-1).